A 358-amino-acid polypeptide reads, in one-letter code: Magnesium-protoporphyrin IX monomethyl ester [oxidative] cyclase 2 (358 aa).

The protein belongs to the AcsF family. Requires Fe cation as cofactor.

It carries out the reaction Mg-protoporphyrin IX 13-monomethyl ester + 3 NADPH + 3 O2 + 2 H(+) = 3,8-divinyl protochlorophyllide a + 3 NADP(+) + 5 H2O. Its pathway is porphyrin-containing compound metabolism; chlorophyll biosynthesis (light-independent). Its function is as follows. Catalyzes the formation of the isocyclic ring in chlorophyll biosynthesis. Mediates the cyclase reaction, which results in the formation of divinylprotochlorophyllide (Pchlide) characteristic of all chlorophylls from magnesium-protoporphyrin IX 13-monomethyl ester (MgPMME). The polypeptide is Magnesium-protoporphyrin IX monomethyl ester [oxidative] cyclase 2 (Synechocystis sp. (strain ATCC 27184 / PCC 6803 / Kazusa)).